The primary structure comprises 420 residues: Gamma-glutamyl phosphate reductase (420 aa).

The protein belongs to the gamma-glutamyl phosphate reductase family.

It is found in the cytoplasm. The catalysed reaction is L-glutamate 5-semialdehyde + phosphate + NADP(+) = L-glutamyl 5-phosphate + NADPH + H(+). Its pathway is amino-acid biosynthesis; L-proline biosynthesis; L-glutamate 5-semialdehyde from L-glutamate: step 2/2. Functionally, catalyzes the NADPH-dependent reduction of L-glutamate 5-phosphate into L-glutamate 5-semialdehyde and phosphate. The product spontaneously undergoes cyclization to form 1-pyrroline-5-carboxylate. The protein is Gamma-glutamyl phosphate reductase of Neisseria meningitidis serogroup C (strain 053442).